The chain runs to 154 residues: Protein FAM162A (154 aa).

The interval 76–102 is required for proapoptotic activity; it reads RFKKEDEIPETVSLEMLDAAKNKMRVK. A helical membrane pass occupies residues 103 to 120; that stretch reads ISYLMIALTVVGCIFMVI.

The protein belongs to the UPF0389 family. In terms of assembly, interacts with HSP90AB1; HSP90AB1 is essential for FAM162A mitochondrial localization and pro-apoptotic activity. Interacts with VDAC2; the interaction is probably involved in inducing mitochondrial permeability transition.

The protein localises to the mitochondrion membrane. In terms of biological role, proposed to be involved in regulation of apoptosis; the exact mechanism may differ between cell types/tissues. May be involved in hypoxia-induced cell death of transformed cells implicating cytochrome C release and caspase activation (such as CASP9) and inducing mitochondrial permeability transition. May be involved in hypoxia-induced cell death of neuronal cells probably by promoting release of AIFM1 from mitochondria to cytoplasm and its translocation to the nucleus; however, the involvement of caspases has been reported conflictingly. The sequence is that of Protein FAM162A (FAM162A) from Homo sapiens (Human).